The sequence spans 586 residues: Ezrin (586 aa).

One can recognise an FERM domain in the interval 2–295 (PKPINVRVTT…GNHELYMRRR (294 aa)). K60 is modified (N6-acetyllysine). Residues 115 to 120 (IYCPPE) carry the [IL]-x-C-x-x-[DE] motif motif. Y146 is modified (phosphotyrosine; by PDGFR). The tract at residues 244-586 (EIRNISFNDK…KQRIDEFEAM (343 aa)) is interaction with SCYL3. The stretch at 302–462 (VQQMKAQARE…QDDLVKTKEE (161 aa)) forms a coiled coil. Residues 305–340 (MKAQAREEKHQKQLERQQLESEKKRREAVEQEKEQM) are disordered. Basic and acidic residues predominate over residues 308-340 (QAREEKHQKQLERQQLESEKKRREAVEQEKEQM). A Phosphotyrosine; by PDGFR modification is found at Y354. S366 bears the Phosphoserine mark. Y478 is modified (phosphotyrosine). S535 bears the Phosphoserine mark. Phosphothreonine; by ROCK2 and PKC/PRKCI is present on T567.

Interacts with PALS1. Found in a complex with EZR, PODXL and NHERF2. Interacts with MCC, PLEKHG6, PODXL, SCYL3/PACE1, NHERF1, NHERF2 and TMEM8B. Interacts (when phosphorylated) with FES/FPS. Interacts with dimeric S100P, the interaction may be activating through unmasking of F-actin binding sites. Identified in complexes that contain VIM, EZR, AHNAK, BFSP1, BFSP2, ANK2, PLEC, PRX and spectrin. Detected in a complex composed of at least EZR, AHNAK, PPL and PRX. Interacts with PDPN (via cytoplasmic domain); activates RHOA and promotes epithelial-mesenchymal transition. Interacts with SPN/CD43 cytoplasmic tail, CD44 and ICAM2. Interacts with SLC9A3; interaction targets SLC9A3 to the apical membrane. Interacts with SLC9A1; regulates interactions of SLC9A1 with cytoskeletal and promotes stress fiber formation. Interacts with CLIC5; may work together in a complex which also includes RDX and MYO6 to stabilize linkages between the plasma membrane and subjacent actin cytoskeleton at the base of stereocilia. Post-translationally, phosphorylated by tyrosine-protein kinases. Phosphorylation by ROCK2 suppresses the head-to-tail association of the N-terminal and C-terminal halves resulting in an opened conformation which is capable of actin and membrane-binding. S-nitrosylation is induced by interferon-gamma and oxidatively-modified low-densitity lipoprotein (LDL(ox)) possibly implicating the iNOS-S100A8/9 transnitrosylase complex.

The protein localises to the apical cell membrane. Its subcellular location is the cell projection. The protein resides in the microvillus membrane. It is found in the ruffle membrane. It localises to the cytoplasm. The protein localises to the cell cortex. Its subcellular location is the cytoskeleton. The protein resides in the microvillus. A head-to-tail association, of the N-terminal and C-terminal halves results in a closed conformation (inactive form) which is incapable of actin or membrane-binding. Its function is as follows. Probably involved in connections of major cytoskeletal structures to the plasma membrane. In epithelial cells, required for the formation of microvilli and membrane ruffles on the apical pole. Along with PLEKHG6, required for normal macropinocytosis. This is Ezrin (EZR) from Oryctolagus cuniculus (Rabbit).